The chain runs to 230 residues: Orotidine 5'-phosphate decarboxylase (230 aa).

Residues D11, K34, 61 to 70 (DLKLHDIPNT), T117, R179, Q188, G208, and R209 contribute to the substrate site. The active-site Proton donor is the K63.

This sequence belongs to the OMP decarboxylase family. Type 1 subfamily. Homodimer.

It carries out the reaction orotidine 5'-phosphate + H(+) = UMP + CO2. The protein operates within pyrimidine metabolism; UMP biosynthesis via de novo pathway; UMP from orotate: step 2/2. Catalyzes the decarboxylation of orotidine 5'-monophosphate (OMP) to uridine 5'-monophosphate (UMP). In Streptococcus pyogenes serotype M18 (strain MGAS8232), this protein is Orotidine 5'-phosphate decarboxylase.